The chain runs to 59 residues: UPF0434 protein VS_2060 (59 aa).

This sequence belongs to the UPF0434 family.

This Vibrio atlanticus (strain LGP32) (Vibrio splendidus (strain Mel32)) protein is UPF0434 protein VS_2060.